The chain runs to 414 residues: Putative competence-damage inducible protein (414 aa).

This sequence belongs to the CinA family.

This chain is Putative competence-damage inducible protein, found in Moorella thermoacetica (strain ATCC 39073 / JCM 9320).